A 472-amino-acid chain; its full sequence is MERKTVLVIADLGGCPPHMFYKSAAEKYNLVSFIPRPFAITASHAALIEKYSVAVIKDKDYFKSLADFEHPDSIYWAHEDHNKPEEEVVEQIVKVAEMFGADAITTNNELFIAPMAKACERLGLRGAGVQAAENARDKNKMRDAFNKAGVKSIKNKRVTTLEDFRAALEEIGTPLILKPTYLASSIGVTLITDTETAEDEFNRVNDYLKSINVPKAVTFEAPFIAEEFLQGEYGDWYQTEGYSDYISIEGIMADGEYFPIAIHDKTPQIGFTETSHITPSILDEEAKKKIVEAAKKANEGLGLQNCATHTEIKLMKNREPGLIESAARFAGWNMIPNIKKVFGLDMAQLLLDVLCFGKDADLPDGLLDQEPYYVADCHLYPQHFKQNGQIPETAEDLVIEAIDIPDGLLKGDTEIVSFSAAAPGTSVDLTLFEAFNSIAAFELKGSNSQDVAESIRQIQQHAKLTAKYVLPV.

E109 serves as a coordination point for Mg(2+). ATP contacts are provided by K138 and K178. The 214-residue stretch at 142–355 (RDAFNKAGVK…MAQLLLDVLC (214 aa)) folds into the ATP-grasp domain. Residue L182 coordinates Mg(2+). Residues 184–185 (SS), 226–229 (EEFL), and Q268 contribute to the ATP site. Substrate is bound by residues E273 and 309 to 311 (HTE). Mg(2+) contacts are provided by E311 and E324. 328–331 (RFAG) is a binding site for substrate.

In terms of assembly, monomer or homodimer. Requires Mg(2+) as cofactor.

It carries out the reaction L-anticapsin + L-alanine + ATP = bacilysin + ADP + phosphate + H(+). It participates in antibiotic biosynthesis; bacilysin biosynthesis. Functionally, part of the bacABCDEFG operon responsible for the biosynthesis of bacilysin, an irreversible inactivator of the glutaminase domain of glucosamine synthetase. Catalyzes the formation of alpha-dipeptides from various L-amino acids in the presence of ATP. In vivo catalyzes the ligation of L-alanine and L-anticapsin (epoxycyclohexanonyl-Ala) to produce the final bacilysin antibiotic (L-Ala-L-4S-cyclohexenonyl-Ala dipeptide). The substrate specificity is restricted to small amino acids such as L-Ala, for the N-terminal end of the dipeptide, whereas a wide range of hydrophobic amino acids such as L-Phe, L-Tyr and L-Met are recognized for the C-terminal end. The sequence is that of Alanine--anticapsin ligase from Bacillus subtilis (strain 168).